The primary structure comprises 629 residues: Natural resistance-associated macrophage protein 2 homolog (629 aa).

At Met1–Lys151 the chain is on the cytoplasmic side. A disordered region spans residues Asn50–Ile119. Residues Gln62–Gln85 are compositionally biased toward low complexity. Residues Asp96 to Asn105 are compositionally biased toward basic and acidic residues. Residues Ile106–Ser118 show a composition bias toward low complexity. A helical transmembrane segment spans residues Ser152–Thr172. The Extracellular segment spans residues Asp173–Tyr182. Residues Gln183 to Ile203 traverse the membrane as a helical segment. At Lys204–Thr224 the chain is on the cytoplasmic side. A helical membrane pass occupies residues Val225–Val245. Residues Ile246 to Asn253 lie on the Extracellular side of the membrane. Residues Ile254–Phe274 form a helical membrane-spanning segment. Residues Leu275–Glu286 lie on the Cytoplasmic side of the membrane. Residues Leu287 to Ser307 traverse the membrane as a helical segment. The Extracellular segment spans residues Lys308 to Ser326. Residues Val327–Gly347 traverse the membrane as a helical segment. The Cytoplasmic portion of the chain corresponds to Ser348–Val376. A helical transmembrane segment spans residues Leu377–Phe397. Over Trp398–Lys421 the chain is Extracellular. Residues Leu422–Gly442 form a helical membrane-spanning segment. Residues Thr443–Arg468 lie on the Cytoplasmic side of the membrane. A helical membrane pass occupies residues Leu469–Thr489. Over Leu490 to Leu491 the chain is Extracellular. A helical membrane pass occupies residues Ile492–Phe512. Residues Thr513–Ser527 lie on the Cytoplasmic side of the membrane. Residues Ile528–Phe548 form a helical membrane-spanning segment. At Gln549–Leu565 the chain is on the extracellular side. N-linked (GlcNAc...) asparagine glycosylation is present at Asn557. The helical transmembrane segment at Thr566 to Ile586 threads the bilayer. Topologically, residues Ser587–Gln629 are cytoplasmic.

Belongs to the NRAMP family.

The protein localises to the cell membrane. Its function is as follows. Divalent transition metal (iron and manganese) transporter. In Dictyostelium discoideum (Social amoeba), this protein is Natural resistance-associated macrophage protein 2 homolog (nramp2).